A 468-amino-acid polypeptide reads, in one-letter code: Methylenetetrahydrofolate--tRNA-(uracil-5-)-methyltransferase TrmFO (468 aa).

13 to 18 (GGGLAG) provides a ligand contact to FAD.

This sequence belongs to the MnmG family. TrmFO subfamily. Requires FAD as cofactor.

The protein resides in the cytoplasm. It catalyses the reaction uridine(54) in tRNA + (6R)-5,10-methylene-5,6,7,8-tetrahydrofolate + NADH + H(+) = 5-methyluridine(54) in tRNA + (6S)-5,6,7,8-tetrahydrofolate + NAD(+). The catalysed reaction is uridine(54) in tRNA + (6R)-5,10-methylene-5,6,7,8-tetrahydrofolate + NADPH + H(+) = 5-methyluridine(54) in tRNA + (6S)-5,6,7,8-tetrahydrofolate + NADP(+). Catalyzes the folate-dependent formation of 5-methyl-uridine at position 54 (M-5-U54) in all tRNAs. The chain is Methylenetetrahydrofolate--tRNA-(uracil-5-)-methyltransferase TrmFO from Bartonella henselae (strain ATCC 49882 / DSM 28221 / CCUG 30454 / Houston 1) (Rochalimaea henselae).